A 458-amino-acid polypeptide reads, in one-letter code: Delta(8)-fatty-acid desaturase (458 aa).

In terms of domain architecture, Cytochrome b5 heme-binding spans 16-100 (KKYITSKELK…LKDYQVSDIS (85 aa)). Residues histidine 51 and histidine 74 each contribute to the heme site. Transmembrane regions (helical) follow at residues 122 to 142 (GVIYSLCFVSLLLSACVYGVL) and 147 to 167 (FWIHMLSGAILGLAWMQIAYL). The short motif at 169–173 (HDAGH) is the Histidine box-1 element. The chain crosses the membrane as a helical span at residues 185 to 205 (FAGIFIGNCITGISIAWWKWT). The Histidine box-2 motif lies at 206–210 (HNAHH). Helical transmembrane passes span 264–284 (YYPIMCVARVNLYLQTILLLI), 293–313 (GLNILGTLIFWTWFPLLVSRL), and 320–340 (VAFVLVSFCVTGIQHIQFTLN). The short motif at 383–387 (QLEHH) is the Histidine box-3 element.

It belongs to the fatty acid desaturase type 1 family. It depends on Fe cation as a cofactor.

The protein resides in the membrane. The enzyme catalyses an N-acyl-(4R)-4-hydroxysphinganine + 2 Fe(II)-[cytochrome b5] + O2 + 2 H(+) = a (4R,8E)-4-hydroxysphingenine ceramide + 2 Fe(III)-[cytochrome b5] + 2 H2O. It catalyses the reaction an N-acyl-(4R)-4-hydroxysphinganine + 2 Fe(II)-[cytochrome b5] + O2 + 2 H(+) = a (4R,8Z)-4-hydroxysphing-8-enine ceramide + 2 Fe(III)-[cytochrome b5] + 2 H2O. Its function is as follows. Plays a major role as delta(8)-fatty-acid desaturase which introduces a double bond at the 8-position in the long-chain base (LCB) of ceramides with or without a hydroxy group at the 4-position. The enzyme produces both the 8E and 8Z isomers. This structural modification contributes to the quantitative partitioning of ceramides between the two major sphingolipid classes, glucosylceramides and glycosylinositolphosphoryl ceramides. Sphingolipids are important membrane components involved in environmental stress responses, such as resistance to chilling, and act as cell signaling molecules. This is Delta(8)-fatty-acid desaturase (sld1) from Helianthus annuus (Common sunflower).